The primary structure comprises 468 residues: Siroheme synthase 3 (468 aa).

The precorrin-2 dehydrogenase /sirohydrochlorin ferrochelatase stretch occupies residues 1-204 (MDYLPIFCRL…GDSASANQLA (204 aa)). Residues 22 to 23 (EV) and 43 to 44 (PE) each bind NAD(+). Ser128 is modified (phosphoserine). A uroporphyrinogen-III C-methyltransferase region spans residues 216-468 (GEVVLVGAGP…GAADAALASA (253 aa)). Pro225 contributes to the S-adenosyl-L-methionine binding site. Asp248 (proton acceptor) is an active-site residue. The Proton donor role is filled by Lys270. Residues 301 to 303 (GGD), Ile306, 331 to 332 (TA), Met383, and Gly412 contribute to the S-adenosyl-L-methionine site.

In the N-terminal section; belongs to the precorrin-2 dehydrogenase / sirohydrochlorin ferrochelatase family. The protein in the C-terminal section; belongs to the precorrin methyltransferase family.

The enzyme catalyses uroporphyrinogen III + 2 S-adenosyl-L-methionine = precorrin-2 + 2 S-adenosyl-L-homocysteine + H(+). The catalysed reaction is precorrin-2 + NAD(+) = sirohydrochlorin + NADH + 2 H(+). It catalyses the reaction siroheme + 2 H(+) = sirohydrochlorin + Fe(2+). Its pathway is cofactor biosynthesis; adenosylcobalamin biosynthesis; precorrin-2 from uroporphyrinogen III: step 1/1. The protein operates within cofactor biosynthesis; adenosylcobalamin biosynthesis; sirohydrochlorin from precorrin-2: step 1/1. It functions in the pathway porphyrin-containing compound metabolism; siroheme biosynthesis; precorrin-2 from uroporphyrinogen III: step 1/1. It participates in porphyrin-containing compound metabolism; siroheme biosynthesis; siroheme from sirohydrochlorin: step 1/1. Its pathway is porphyrin-containing compound metabolism; siroheme biosynthesis; sirohydrochlorin from precorrin-2: step 1/1. Multifunctional enzyme that catalyzes the SAM-dependent methylations of uroporphyrinogen III at position C-2 and C-7 to form precorrin-2 via precorrin-1. Then it catalyzes the NAD-dependent ring dehydrogenation of precorrin-2 to yield sirohydrochlorin. Finally, it catalyzes the ferrochelation of sirohydrochlorin to yield siroheme. The sequence is that of Siroheme synthase 3 from Aeromonas hydrophila subsp. hydrophila (strain ATCC 7966 / DSM 30187 / BCRC 13018 / CCUG 14551 / JCM 1027 / KCTC 2358 / NCIMB 9240 / NCTC 8049).